The primary structure comprises 91 residues: Probable Fe(2+)-trafficking protein (91 aa).

This sequence belongs to the Fe(2+)-trafficking protein family.

Could be a mediator in iron transactions between iron acquisition and iron-requiring processes, such as synthesis and/or repair of Fe-S clusters in biosynthetic enzymes. This is Probable Fe(2+)-trafficking protein from Xanthomonas axonopodis pv. citri (strain 306).